The sequence spans 243 residues: UMP-CMP kinase 2 (243 aa).

69–74 (GSGKGT) lines the ATP pocket. Positions 89-118 (SAGDLLRSEISTGREKGELILNIIKEGKIV) are NMP. A ribonucleoside 5'-phosphate is bound by residues R95, 116-118 (KIV), and 143-146 (GFPR). A CMP-binding site is contributed by N150. The LID stretch occupies residues 181–189 (GRNQGRVDD). R182 lines the ATP pocket. The a ribonucleoside 5'-phosphate site is built by R186 and R197.

The protein belongs to the adenylate kinase family. UMP-CMP kinase subfamily. In terms of assembly, monomer. It depends on Mg(2+) as a cofactor.

Its subcellular location is the cytoplasm. The protein localises to the nucleus. It catalyses the reaction UMP + ATP = UDP + ADP. The enzyme catalyses CMP + ATP = CDP + ADP. The catalysed reaction is dCMP + ATP = dCDP + ADP. Catalyzes the phosphorylation of pyrimidine nucleoside monophosphates at the expense of ATP. Plays an important role in de novo pyrimidine nucleotide biosynthesis. Has preference for UMP and CMP as phosphate acceptors. In Oryza sativa subsp. japonica (Rice), this protein is UMP-CMP kinase 2.